Here is a 671-residue protein sequence, read N- to C-terminus: UvrABC system protein B (671 aa).

Positions 25 to 412 constitute a Helicase ATP-binding domain; that stretch reads EGIDAGLAHQ…AGRIVEQVVR (388 aa). 38–45 is an ATP binding site; the sequence is GVTGSGKT. A Beta-hairpin motif is present at residues 91–114; that stretch reads YYDYYQPEAYVPSSDTFIEKDASI. Residues 429-582 enclose the Helicase C-terminal domain; that stretch reads QVDDLLSEIH…QIAFNLEHGI (154 aa). The interval 601–624 is disordered; sequence PGSRSKKRKGMAKAAEENARYENE. Basic and acidic residues predominate over residues 614-624; it reads AAEENARYENE. The 36-residue stretch at 632 to 667 folds into the UVR domain; it reads NKRIRQLEEKMYQLARDLEFEAAAQMRDEIGKLRER.

Belongs to the UvrB family. Forms a heterotetramer with UvrA during the search for lesions. Interacts with UvrC in an incision complex.

It localises to the cytoplasm. The UvrABC repair system catalyzes the recognition and processing of DNA lesions. A damage recognition complex composed of 2 UvrA and 2 UvrB subunits scans DNA for abnormalities. Upon binding of the UvrA(2)B(2) complex to a putative damaged site, the DNA wraps around one UvrB monomer. DNA wrap is dependent on ATP binding by UvrB and probably causes local melting of the DNA helix, facilitating insertion of UvrB beta-hairpin between the DNA strands. Then UvrB probes one DNA strand for the presence of a lesion. If a lesion is found the UvrA subunits dissociate and the UvrB-DNA preincision complex is formed. This complex is subsequently bound by UvrC and the second UvrB is released. If no lesion is found, the DNA wraps around the other UvrB subunit that will check the other stand for damage. The chain is UvrABC system protein B from Pseudomonas syringae pv. syringae (strain B728a).